The chain runs to 282 residues: Bifunctional protein FolD (282 aa).

163–165 (GRS) is an NADP(+) binding site.

The protein belongs to the tetrahydrofolate dehydrogenase/cyclohydrolase family. As to quaternary structure, homodimer.

The catalysed reaction is (6R)-5,10-methylene-5,6,7,8-tetrahydrofolate + NADP(+) = (6R)-5,10-methenyltetrahydrofolate + NADPH. The enzyme catalyses (6R)-5,10-methenyltetrahydrofolate + H2O = (6R)-10-formyltetrahydrofolate + H(+). The protein operates within one-carbon metabolism; tetrahydrofolate interconversion. Functionally, catalyzes the oxidation of 5,10-methylenetetrahydrofolate to 5,10-methenyltetrahydrofolate and then the hydrolysis of 5,10-methenyltetrahydrofolate to 10-formyltetrahydrofolate. The protein is Bifunctional protein FolD of Leuconostoc citreum (strain KM20).